Here is a 263-residue protein sequence, read N- to C-terminus: DNA repair protein RecO (263 aa).

A disordered region spans residues 243–263; sequence DRKETARETVPTSDGTASNAV. A compositionally biased stretch (polar residues) spans 252–263; sequence VPTSDGTASNAV.

It belongs to the RecO family.

Functionally, involved in DNA repair and RecF pathway recombination. This is DNA repair protein RecO from Neisseria meningitidis serogroup C / serotype 2a (strain ATCC 700532 / DSM 15464 / FAM18).